Consider the following 987-residue polypeptide: UPF0182 protein Lxx09300 (987 aa).

The next 7 helical transmembrane spans lie at 17–37, 59–79, 108–128, 167–187, 206–226, 256–276, and 283–303; these read VWTT…FAGL, AAIA…WVVI, RLAM…SAAS, VGFA…TCYL, VQIS…VWLD, AVLA…AFTG, and VGTA…PWAI. Disordered regions lie at residues 700 to 719 and 886 to 947; these read RDDA…DPTL and TAGD…ALQQ. Residues 705–719 show a composition bias toward low complexity; sequence TTPNDPTSSPTDPTL. Residues 897–932 show a composition bias toward gly residues; the sequence is GGSGGGSSGDAGSSAGGGSSGGGGSSAGGSSSGSGS. The span at 933-947 shows a compositional bias: low complexity; it reads SGTQSNAALQRALQQ.

It belongs to the UPF0182 family.

It is found in the cell membrane. The chain is UPF0182 protein Lxx09300 from Leifsonia xyli subsp. xyli (strain CTCB07).